The following is a 39-amino-acid chain: Pro-opiomelanocortin (39 aa).

Residue methionine 13 is modified to Methionine amide.

This sequence belongs to the POMC family.

It localises to the secreted. Its function is as follows. Precursor protein for pituitary hormones that regulate stress and environmental adaptation. Stimulates the adrenal glands to release cortisol. Functionally, anorexigenic peptide. Increases the pigmentation of skin by increasing melanin production in melanocytes. The chain is Pro-opiomelanocortin (pomc) from Squalus acanthias (Spiny dogfish).